Reading from the N-terminus, the 215-residue chain is Protein-methionine-sulfoxide reductase heme-binding subunit MsrQ (215 aa).

6 helical membrane passes run 17–37 (AAIW…FYLA), 50–70 (FEHL…LVTP), 85–105 (ALGL…LVLD), 121–141 (PYIM…LTSN), 152–172 (WNTL…HFVL), and 177–197 (ITLE…YRLV).

The protein belongs to the MsrQ family. In terms of assembly, heterodimer of a catalytic subunit (MsrP) and a heme-binding subunit (MsrQ). The cofactor is FMN. Heme b serves as cofactor.

It is found in the cell inner membrane. In terms of biological role, part of the MsrPQ system that repairs oxidized periplasmic proteins containing methionine sulfoxide residues (Met-O), using respiratory chain electrons. Thus protects these proteins from oxidative-stress damage caused by reactive species of oxygen and chlorine generated by the host defense mechanisms. MsrPQ is essential for the maintenance of envelope integrity under bleach stress, rescuing a wide series of structurally unrelated periplasmic proteins from methionine oxidation. MsrQ provides electrons for reduction to the reductase catalytic subunit MsrP, using the quinone pool of the respiratory chain. In Agrobacterium fabrum (strain C58 / ATCC 33970) (Agrobacterium tumefaciens (strain C58)), this protein is Protein-methionine-sulfoxide reductase heme-binding subunit MsrQ.